The chain runs to 306 residues: tRNA dimethylallyltransferase (306 aa).

Residue G12–S19 participates in ATP binding. T14–S19 contacts substrate.

Belongs to the IPP transferase family. Monomer. Mg(2+) is required as a cofactor.

The catalysed reaction is adenosine(37) in tRNA + dimethylallyl diphosphate = N(6)-dimethylallyladenosine(37) in tRNA + diphosphate. Functionally, catalyzes the transfer of a dimethylallyl group onto the adenine at position 37 in tRNAs that read codons beginning with uridine, leading to the formation of N6-(dimethylallyl)adenosine (i(6)A). The polypeptide is tRNA dimethylallyltransferase (Desulfatibacillum aliphaticivorans).